A 123-amino-acid chain; its full sequence is Small ribosomal subunit protein uS13 (123 aa).

Positions 97–123 are disordered; that stretch reads PCRGQRTHTNSRTRKGPRRGVMAKKKK.

Belongs to the universal ribosomal protein uS13 family. As to quaternary structure, part of the 30S ribosomal subunit. Forms a loose heterodimer with protein S19. Forms two bridges to the 50S subunit in the 70S ribosome.

In terms of biological role, located at the top of the head of the 30S subunit, it contacts several helices of the 16S rRNA. In the 70S ribosome it contacts the 23S rRNA (bridge B1a) and protein L5 of the 50S subunit (bridge B1b), connecting the 2 subunits; these bridges are implicated in subunit movement. Contacts the tRNAs in the A and P-sites. This Solidesulfovibrio magneticus (strain ATCC 700980 / DSM 13731 / RS-1) (Desulfovibrio magneticus) protein is Small ribosomal subunit protein uS13.